The sequence spans 258 residues: Thiazole synthase 1 (258 aa).

Catalysis depends on K97, which acts as the Schiff-base intermediate with DXP. 1-deoxy-D-xylulose 5-phosphate contacts are provided by residues G158, 184–185, and 206–207; these read AG and NT.

It belongs to the ThiG family. In terms of assembly, homotetramer. Forms heterodimers with either ThiH or ThiS.

The protein localises to the cytoplasm. It catalyses the reaction [ThiS sulfur-carrier protein]-C-terminal-Gly-aminoethanethioate + 2-iminoacetate + 1-deoxy-D-xylulose 5-phosphate = [ThiS sulfur-carrier protein]-C-terminal Gly-Gly + 2-[(2R,5Z)-2-carboxy-4-methylthiazol-5(2H)-ylidene]ethyl phosphate + 2 H2O + H(+). It participates in cofactor biosynthesis; thiamine diphosphate biosynthesis. Functionally, catalyzes the rearrangement of 1-deoxy-D-xylulose 5-phosphate (DXP) to produce the thiazole phosphate moiety of thiamine. Sulfur is provided by the thiocarboxylate moiety of the carrier protein ThiS. In vitro, sulfur can be provided by H(2)S. In Syntrophotalea carbinolica (strain DSM 2380 / NBRC 103641 / GraBd1) (Pelobacter carbinolicus), this protein is Thiazole synthase 1.